Consider the following 182-residue polypeptide: Thymidine kinase (182 aa).

8-15 (GPMFSGKT) lines the ATP pocket. E85 serves as the catalytic Proton acceptor. F117 is a binding site for substrate. Residues C142 and C145 each coordinate Zn(2+). Position 161-165 (161-165 (IIEIG)) interacts with substrate. The Zn(2+) site is built by C174 and C177.

The protein belongs to the thymidine kinase family.

It catalyses the reaction thymidine + ATP = dTMP + ADP + H(+). The chain is Thymidine kinase (TK) from Amsacta moorei entomopoxvirus (AmEPV).